The primary structure comprises 572 residues: Proline--tRNA ligase (572 aa).

This sequence belongs to the class-II aminoacyl-tRNA synthetase family. ProS type 1 subfamily. In terms of assembly, homodimer.

The protein resides in the cytoplasm. It catalyses the reaction tRNA(Pro) + L-proline + ATP = L-prolyl-tRNA(Pro) + AMP + diphosphate. Catalyzes the attachment of proline to tRNA(Pro) in a two-step reaction: proline is first activated by ATP to form Pro-AMP and then transferred to the acceptor end of tRNA(Pro). As ProRS can inadvertently accommodate and process non-cognate amino acids such as alanine and cysteine, to avoid such errors it has two additional distinct editing activities against alanine. One activity is designated as 'pretransfer' editing and involves the tRNA(Pro)-independent hydrolysis of activated Ala-AMP. The other activity is designated 'posttransfer' editing and involves deacylation of mischarged Ala-tRNA(Pro). The misacylated Cys-tRNA(Pro) is not edited by ProRS. The protein is Proline--tRNA ligase of Haemophilus influenzae (strain PittGG).